We begin with the raw amino-acid sequence, 84 residues long: Putative protein BCE-1 (84 aa).

This Homo sapiens (Human) protein is Putative protein BCE-1 (BCE1).